Reading from the N-terminus, the 80-residue chain is MSAVVVDAVEHLVRGIVDNPDDVRVDLITSRRGRTVEVHVHPDDLGKVIGRGGRTATALRTLVAGIGGRGIRVDVVDTDQ.

The KH domain maps to 33–80; sequence GRTVEVHVHPDDLGKVIGRGGRTATALRTLVAGIGGRGIRVDVVDTDQ.

This sequence belongs to the KhpA RNA-binding protein family.

It localises to the cytoplasm. In terms of biological role, a probable RNA-binding protein. The sequence is that of RNA-binding protein KhpA from Mycobacterium bovis (strain ATCC BAA-935 / AF2122/97).